We begin with the raw amino-acid sequence, 259 residues long: Acetylglutamate kinase (259 aa).

Residues 45 to 46 (GG), arginine 67, and asparagine 159 each bind substrate.

This sequence belongs to the acetylglutamate kinase family. ArgB subfamily.

It is found in the cytoplasm. It catalyses the reaction N-acetyl-L-glutamate + ATP = N-acetyl-L-glutamyl 5-phosphate + ADP. It participates in amino-acid biosynthesis; L-arginine biosynthesis; N(2)-acetyl-L-ornithine from L-glutamate: step 2/4. In terms of biological role, catalyzes the ATP-dependent phosphorylation of N-acetyl-L-glutamate. The sequence is that of Acetylglutamate kinase from Aeromonas salmonicida (strain A449).